The chain runs to 296 residues: Bifunctional protein FolD (296 aa).

Residues 166–168, Ser195, and Thr236 contribute to the NADP(+) site; that span reads GRS.

The protein belongs to the tetrahydrofolate dehydrogenase/cyclohydrolase family. In terms of assembly, homodimer.

The enzyme catalyses (6R)-5,10-methylene-5,6,7,8-tetrahydrofolate + NADP(+) = (6R)-5,10-methenyltetrahydrofolate + NADPH. The catalysed reaction is (6R)-5,10-methenyltetrahydrofolate + H2O = (6R)-10-formyltetrahydrofolate + H(+). It participates in one-carbon metabolism; tetrahydrofolate interconversion. Functionally, catalyzes the oxidation of 5,10-methylenetetrahydrofolate to 5,10-methenyltetrahydrofolate and then the hydrolysis of 5,10-methenyltetrahydrofolate to 10-formyltetrahydrofolate. This Dehalococcoides mccartyi (strain CBDB1) protein is Bifunctional protein FolD.